A 183-amino-acid polypeptide reads, in one-letter code: ATP synthase subunit delta (183 aa).

It belongs to the ATPase delta chain family. As to quaternary structure, F-type ATPases have 2 components, F(1) - the catalytic core - and F(0) - the membrane proton channel. F(1) has five subunits: alpha(3), beta(3), gamma(1), delta(1), epsilon(1). F(0) has three main subunits: a(1), b(2) and c(10-14). The alpha and beta chains form an alternating ring which encloses part of the gamma chain. F(1) is attached to F(0) by a central stalk formed by the gamma and epsilon chains, while a peripheral stalk is formed by the delta and b chains.

Its subcellular location is the cell inner membrane. Its function is as follows. F(1)F(0) ATP synthase produces ATP from ADP in the presence of a proton or sodium gradient. F-type ATPases consist of two structural domains, F(1) containing the extramembraneous catalytic core and F(0) containing the membrane proton channel, linked together by a central stalk and a peripheral stalk. During catalysis, ATP synthesis in the catalytic domain of F(1) is coupled via a rotary mechanism of the central stalk subunits to proton translocation. In terms of biological role, this protein is part of the stalk that links CF(0) to CF(1). It either transmits conformational changes from CF(0) to CF(1) or is implicated in proton conduction. This Desulfosudis oleivorans (strain DSM 6200 / JCM 39069 / Hxd3) (Desulfococcus oleovorans) protein is ATP synthase subunit delta.